We begin with the raw amino-acid sequence, 155 residues long: Large ribosomal subunit protein uL22 (155 aa).

The protein belongs to the universal ribosomal protein uL22 family. In terms of assembly, part of the 50S ribosomal subunit.

Functionally, this protein binds specifically to 23S rRNA. It makes multiple contacts with different domains of the 23S rRNA in the assembled 50S subunit and ribosome. In terms of biological role, the globular domain of the protein is located near the polypeptide exit tunnel on the outside of the subunit, while an extended beta-hairpin is found that lines the wall of the exit tunnel in the center of the 70S ribosome. This Pyrococcus furiosus (strain ATCC 43587 / DSM 3638 / JCM 8422 / Vc1) protein is Large ribosomal subunit protein uL22.